The following is a 102-amino-acid chain: FMRFamide-like neuropeptides 9 (102 aa).

The first 19 residues, 1–19, serve as a signal peptide directing secretion; it reads MNQFYALFLVACIAAMANA. A propeptide spanning residues 20 to 63 is cleaved from the precursor; the sequence is YEEPDLDALAEFCGKESNRKYCDQIAQLATQHAIGINQEQVRME. Phenylalanine amide is present on phenylalanine 72. Residues 75-90 constitute a propeptide that is removed on maturation; it reads RSGYPLVIDDEEMRMD. Phenylalanine amide is present on phenylalanine 99.

Belongs to the FARP (FMRFamide related peptide) family. In terms of tissue distribution, each flp gene is expressed in a distinct set of neurons.

The protein localises to the secreted. FMRFamides and FMRFamide-like peptides are neuropeptides. Its function is as follows. KPSFVRF-amide: Has no effect on somatic body wall muscle, inhibits contraction of vaginal vera muscle, and inhibits the activity of the dissected pharyngeal myogenic muscle system. Acts as a ligand for the npr-22 receptor in vitro. The polypeptide is FMRFamide-like neuropeptides 9 (Caenorhabditis elegans).